The chain runs to 306 residues: UDP-N-acetylenolpyruvoylglucosamine reductase (306 aa).

The FAD-binding PCMH-type domain occupies 34–198 (VGGPADLLIT…LEVTFKLHNS (165 aa)). Arg-177 is a catalytic residue. Ser-227 (proton donor) is an active-site residue. The active site involves Glu-297.

The protein belongs to the MurB family. The cofactor is FAD.

It is found in the cytoplasm. It carries out the reaction UDP-N-acetyl-alpha-D-muramate + NADP(+) = UDP-N-acetyl-3-O-(1-carboxyvinyl)-alpha-D-glucosamine + NADPH + H(+). The protein operates within cell wall biogenesis; peptidoglycan biosynthesis. In terms of biological role, cell wall formation. In Clostridium botulinum (strain ATCC 19397 / Type A), this protein is UDP-N-acetylenolpyruvoylglucosamine reductase.